Reading from the N-terminus, the 124-residue chain is Ribonuclease pancreatic (124 aa).

Basic and acidic residues predominate over residues 1-13 (KESAAAKFERQHM). Residues 1–24 (KESAAAKFERQHMDPSMSSASSSN) are disordered. Substrate-binding residues include K7 and R10. H12 serves as the catalytic Proton acceptor. 4 cysteine pairs are disulfide-bonded: C26–C84, C40–C95, C58–C110, and C65–C72. Substrate contacts are provided by residues 41-45 (KPVNT), K66, and R85. H119 acts as the Proton donor in catalysis.

It belongs to the pancreatic ribonuclease family. As to quaternary structure, monomer. Interacts with and forms tight 1:1 complexes with RNH1. Dimerization of two such complexes may occur. Interaction with RNH1 inhibits this protein. As to expression, pancreas.

It localises to the secreted. It carries out the reaction an [RNA] containing cytidine + H2O = an [RNA]-3'-cytidine-3'-phosphate + a 5'-hydroxy-ribonucleotide-3'-[RNA].. The enzyme catalyses an [RNA] containing uridine + H2O = an [RNA]-3'-uridine-3'-phosphate + a 5'-hydroxy-ribonucleotide-3'-[RNA].. Functionally, endonuclease that catalyzes the cleavage of RNA on the 3' side of pyrimidine nucleotides. Acts on single-stranded and double-stranded RNA. The sequence is that of Ribonuclease pancreatic (RNASE1) from Dama dama (Fallow deer).